The primary structure comprises 193 residues: Holliday junction branch migration complex subunit RuvA (193 aa).

A domain I region spans residues 1–64; the sequence is MIGRIAGILL…EDAHLLYGFL (64 aa). The tract at residues 65-139 is domain II; that stretch reads TPQERTTFRE…GKLGADLGAL (75 aa). A flexible linker region spans residues 139 to 143; that stretch reads LAGAA. The domain III stretch occupies residues 144-193; that stretch reads SASDHATDILNALLALGYSEKEGLAAIKNVPAGTGVSEGIKLALKALSKA.

The protein belongs to the RuvA family. As to quaternary structure, homotetramer. Forms an RuvA(8)-RuvB(12)-Holliday junction (HJ) complex. HJ DNA is sandwiched between 2 RuvA tetramers; dsDNA enters through RuvA and exits via RuvB. An RuvB hexamer assembles on each DNA strand where it exits the tetramer. Each RuvB hexamer is contacted by two RuvA subunits (via domain III) on 2 adjacent RuvB subunits; this complex drives branch migration. In the full resolvosome a probable DNA-RuvA(4)-RuvB(12)-RuvC(2) complex forms which resolves the HJ.

It localises to the cytoplasm. In terms of biological role, the RuvA-RuvB-RuvC complex processes Holliday junction (HJ) DNA during genetic recombination and DNA repair, while the RuvA-RuvB complex plays an important role in the rescue of blocked DNA replication forks via replication fork reversal (RFR). RuvA specifically binds to HJ cruciform DNA, conferring on it an open structure. The RuvB hexamer acts as an ATP-dependent pump, pulling dsDNA into and through the RuvAB complex. HJ branch migration allows RuvC to scan DNA until it finds its consensus sequence, where it cleaves and resolves the cruciform DNA. In Burkholderia cenocepacia (strain HI2424), this protein is Holliday junction branch migration complex subunit RuvA.